We begin with the raw amino-acid sequence, 20 residues long: GIFTFEDESTSTVAPAKLYK.

The protein belongs to the BetVI family.

This is Protein PR-L1 from Lupinus luteus (European yellow lupine).